Here is a 336-residue protein sequence, read N- to C-terminus: CST complex subunit STN1 (336 aa).

Residues 49–126 (VDILGTVVCV…EVVASIFYKV (78 aa)) constitute a DNA-binding region (OB). Winged helix-turn-helix (wHTH) regions lie at residues 162-263 (QSQE…YVTD) and 264-336 (HDKE…YTAF).

This sequence belongs to the CTC1 family. In terms of assembly, component of the CST complex.

The protein localises to the nucleus. It localises to the chromosome. It is found in the telomere. Its function is as follows. Component of the CST complex proposed to act as a specialized replication factor promoting DNA replication under conditions of replication stress or natural replication barriers such as the telomere duplex. The CST complex binds single-stranded DNA with high affinity in a sequence-independent manner, while isolated subunits bind DNA with low affinity by themselves. Initially the CST complex has been proposed to protect telomeres from DNA degradation. However, the CST complex has been shown to be involved in several aspects of telomere replication. This is CST complex subunit STN1 from Aquarana catesbeiana (American bullfrog).